Consider the following 316-residue polypeptide: MEQSFLAYLRGRTRQLPQVAVGIGDDAAVIDWPGSVSSDQPQLRQVACTDQILDGVDFRSEEQSLSDIGFKAMAINLSDIAAMGATPSSALVTLALPAENATEIAGEVYEGILEAAQKYQVAIAGGDLSTYDGPLSISITILGWTEQPWLRTGAEEGDALFVTGALGGSLLGRHLRPEPRVELAAKLKQTVNVHAAIDVSDGFSLDLDRMLAASRMGAELELETLPISEAAHQFAEKSGRTPLEHAWSDGEDFELIFCVAPEEAAIIESTDWGVPVTRVGKVVGRTGLWKRVATSKFERVFPQGFVHGETDVAAAN.

Mg(2+) contacts are provided by D26, T49, and D50. D57 lines the substrate pocket. A Mg(2+)-binding site is contributed by D79. ATP contacts are provided by residues Y109, 126–127, and R151; that span reads GD. A Mg(2+)-binding site is contributed by D127. Residue D198 participates in Mg(2+) binding. S200 serves as a coordination point for ATP. Position 201 (D201) interacts with Mg(2+). Substrate is bound by residues E251 and F305.

It belongs to the thiamine-monophosphate kinase family.

The catalysed reaction is thiamine phosphate + ATP = thiamine diphosphate + ADP. Its pathway is cofactor biosynthesis; thiamine diphosphate biosynthesis; thiamine diphosphate from thiamine phosphate: step 1/1. Catalyzes the ATP-dependent phosphorylation of thiamine-monophosphate (TMP) to form thiamine-pyrophosphate (TPP), the active form of vitamin B1. The polypeptide is Thiamine-monophosphate kinase (Rhodopirellula baltica (strain DSM 10527 / NCIMB 13988 / SH1)).